We begin with the raw amino-acid sequence, 264 residues long: uncharacterized protein (264 aa).

3 stretches are compositionally biased toward polar residues: residues 1-18 (MFEN…SSRS), 73-83 (SLGSVGTTEVN), and 126-139 (KTTQ…QPVL). Disordered regions lie at residues 1 to 47 (MFEN…WVGS) and 68 to 264 (RKEP…LSFE). The segment covering 149-171 (SSGQPQVSSSAQPSPADASQPEA) has biased composition (low complexity). The span at 194–212 (LIHKDGQDDPKLKVTECRR) shows a compositional bias: basic and acidic residues. Phosphoserine is present on residues Ser-214, Ser-215, Ser-241, and Ser-250.

This is an uncharacterized protein from Bos taurus (Bovine).